The sequence spans 123 residues: Small ribosomal subunit protein uS12 (123 aa).

Residues Met1–Ala26 form a disordered region. At Asp89 the chain carries 3-methylthioaspartic acid. Residues Thr104 to Lys123 form a disordered region. Positions Lys108–Lys123 are enriched in basic residues.

Belongs to the universal ribosomal protein uS12 family. Part of the 30S ribosomal subunit. Contacts proteins S8 and S17. May interact with IF1 in the 30S initiation complex.

With S4 and S5 plays an important role in translational accuracy. In terms of biological role, interacts with and stabilizes bases of the 16S rRNA that are involved in tRNA selection in the A site and with the mRNA backbone. Located at the interface of the 30S and 50S subunits, it traverses the body of the 30S subunit contacting proteins on the other side and probably holding the rRNA structure together. The combined cluster of proteins S8, S12 and S17 appears to hold together the shoulder and platform of the 30S subunit. The chain is Small ribosomal subunit protein uS12 from Acidithiobacillus ferrooxidans (strain ATCC 23270 / DSM 14882 / CIP 104768 / NCIMB 8455) (Ferrobacillus ferrooxidans (strain ATCC 23270)).